We begin with the raw amino-acid sequence, 126 residues long: Ribosome-binding factor A (126 aa).

It belongs to the RbfA family. In terms of assembly, monomer. Binds 30S ribosomal subunits, but not 50S ribosomal subunits or 70S ribosomes.

It is found in the cytoplasm. Its function is as follows. One of several proteins that assist in the late maturation steps of the functional core of the 30S ribosomal subunit. Associates with free 30S ribosomal subunits (but not with 30S subunits that are part of 70S ribosomes or polysomes). Required for efficient processing of 16S rRNA. May interact with the 5'-terminal helix region of 16S rRNA. The chain is Ribosome-binding factor A from Clostridioides difficile (strain 630) (Peptoclostridium difficile).